The primary structure comprises 483 residues: MLTLDTLNVMLAVSEEGLIEEMIIALLASPQLAVFFEKFPRLKAAITDDVPRWREALRSRLKDARVPPELTEEVMCYQQSQLLSTPQFIVQLPQILDLLHRLNSPWAEQARQLVDANSAITSALHTLFLQRWRLSLIVQATTLNQQLLEEEREQLLSEVQERMTLSGQLEPILADNNTAAGRLWDMSAGQLKRGDYQLIVKYGEFLNEQPELKRLAEQLGRSREAKSIPRNDAQMETFRTMVREPATVPEQVDGLQQSDDILRLLPPELATLGITELEYEFYRRLVEKQLLTYRLHGESWREKVIERPVVHKDYDEQPRGPFIVCVDTSGSMGGFNEQCAKAFCLALMRIALAENRRCYIMLFSTEIVRYELSGPQGIEQAIRFLSQQFRGGTDLASCFRAIMERLQSREWFDADAVVISDFIAQRLPDDVTSKVKELQRVHQHRFHAVAMSAHGKPGIMRIFDHIWRFDTGMRSRLLRRWRR.

The protein belongs to the ViaA family. Homodimer. Interacts with RavA.

Its subcellular location is the cytoplasm. Component of the RavA-ViaA chaperone complex, which may act on the membrane to optimize the function of some of the respiratory chains. ViaA stimulates the ATPase activity of RavA. In Escherichia coli O9:H4 (strain HS), this protein is Regulatory protein ViaA.